The chain runs to 336 residues: Nuclear envelope-associated protein 3 (336 aa).

Coiled-coil stretches lie at residues 14 to 87 and 128 to 261; these read LKDL…IRAS and VLSK…LKKK. The short motif at 240–261 is the Bipartite nuclear localization signal element; the sequence is KTKELEDQVENQRRIDQELKKK. The helical transmembrane segment at 313-330 threads the bilayer; it reads LWDKSGFKIVVSMSMLIL.

As to quaternary structure, forms homomers and heteromers with NEAP1 and NEAP2. Interacts with SUN1 and SUN2.

The protein resides in the nucleus inner membrane. The protein localises to the nucleus. It localises to the nucleoplasm. The polypeptide is Nuclear envelope-associated protein 3 (Arabidopsis thaliana (Mouse-ear cress)).